Reading from the N-terminus, the 486-residue chain is Zinc finger chaperone ZPR1 (486 aa).

The disordered stretch occupies residues 1 to 31 (MSEQKEDLFKPVGEAAAEVEDESIAEQNKAN). Ser-23 bears the Phosphoserine mark. C4-type zinc fingers lie at residues 54-86 (CMNC…CPHC) and 295-327 (CPSC…CDHC). Thr-407 carries the post-translational modification Phosphothreonine.

This sequence belongs to the ZPR1 family. As to quaternary structure, interacts with elongation factor 1-alpha.

The protein localises to the cytoplasm. It is found in the nucleus. In terms of biological role, acts as a protein folding chaperone for elongation factor 1-alpha. The polypeptide is Zinc finger chaperone ZPR1 (Saccharomyces cerevisiae (strain ATCC 204508 / S288c) (Baker's yeast)).